The following is a 556-amino-acid chain: Urocanate hydratase (556 aa).

NAD(+)-binding positions include 52-53 (GG), glutamine 130, 176-178 (GMG), glutamate 196, arginine 201, 242-243 (NA), 263-267 (QTSAH), 273-274 (YL), and tyrosine 322. The active site involves cysteine 410. Glycine 492 serves as a coordination point for NAD(+).

It belongs to the urocanase family. Requires NAD(+) as cofactor.

It is found in the cytoplasm. It carries out the reaction 4-imidazolone-5-propanoate = trans-urocanate + H2O. The protein operates within amino-acid degradation; L-histidine degradation into L-glutamate; N-formimidoyl-L-glutamate from L-histidine: step 2/3. In terms of biological role, catalyzes the conversion of urocanate to 4-imidazolone-5-propionate. The sequence is that of Urocanate hydratase from Shewanella piezotolerans (strain WP3 / JCM 13877).